A 169-amino-acid chain; its full sequence is Neurotensin/neuromedin N (169 aa).

An N-terminal signal peptide occupies residues 1-22 (MIGMNLQLVCLTLLAFSSWSLC).

Belongs to the neurotensin family. In terms of assembly, interacts with NTSR1. Interacts with SORT1. Interacts with SORL1. In terms of processing, neurotensin is cleaved and degraded by Angiotensin-converting enzyme (ACE) and neprilysin (MME).

The protein resides in the secreted. It localises to the cytoplasmic vesicle. It is found in the secretory vesicle. Its function is as follows. Neurotensin may play an endocrine or paracrine role in the regulation of fat metabolism. It causes contraction of smooth muscle. The protein is Neurotensin/neuromedin N (Nts) of Rattus norvegicus (Rat).